Reading from the N-terminus, the 269-residue chain is Tryptophan synthase alpha chain (269 aa).

Active-site proton acceptor residues include E41 and D52.

This sequence belongs to the TrpA family. In terms of assembly, tetramer of two alpha and two beta chains.

It catalyses the reaction (1S,2R)-1-C-(indol-3-yl)glycerol 3-phosphate + L-serine = D-glyceraldehyde 3-phosphate + L-tryptophan + H2O. It functions in the pathway amino-acid biosynthesis; L-tryptophan biosynthesis; L-tryptophan from chorismate: step 5/5. Its function is as follows. The alpha subunit is responsible for the aldol cleavage of indoleglycerol phosphate to indole and glyceraldehyde 3-phosphate. The sequence is that of Tryptophan synthase alpha chain from Geobacillus stearothermophilus (Bacillus stearothermophilus).